We begin with the raw amino-acid sequence, 1055 residues long: Cellulose synthase A catalytic subunit 9 [UDP-forming] (1055 aa).

Residues 1-268 (MEASAGLVAG…ASSKVNPYRM (268 aa)) lie on the Cytoplasmic side of the membrane. Residues Cys-37, Cys-40, Cys-56, Cys-59, Cys-64, Cys-67, Cys-79, and Cys-82 each coordinate Zn(2+). The segment at 37–83 (CEICGDEVGRTVDGDLFVACNECGFPVCRPCYEYERREGTQNCPQCK) adopts an RING-type; degenerate zinc-finger fold. A helical transmembrane segment spans residues 269–289 (VIILRLVVLGFFLRYRILHPV). The Extracellular portion of the chain corresponds to 290-291 (PD). Residues 292-312 (AIPLWLTSIICEIWFAVSWIL) traverse the membrane as a helical segment. Over 313 to 831 (DQFPKWYPID…LERFSYINTT (519 aa)) the chain is Cytoplasmic. UDP-alpha-D-glucose is bound by residues Ser-351, Lys-357, Glu-358, and Asp-387. The active site involves Asp-387. The stretch at 439 to 468 (NFVQERRAMKREYEEFKVRINALVAKAQKV) forms a coiled coil. Lys-528 lines the UDP-alpha-D-glucose pocket. Mn(2+) is bound by residues Lys-529 and Asp-553. The active site involves Asp-753. Residues 832 to 852 (IYPFTSLPLLAYCTLPAVCLL) traverse the membrane as a helical segment. Over 853–860 (TGKFIMPP) the chain is Extracellular. Residues 861 to 881 (ISTFASLFFIALFISIFATGI) form a helical membrane-spanning segment. The Cytoplasmic portion of the chain corresponds to 882–899 (LEMRWSGVSIEEWWRNEQ). A helical membrane pass occupies residues 900 to 920 (FWVIGGVSAHLFAVVQGLLKV). Topologically, residues 921–951 (LAGIDTNFTVTSKATGDEDDEFAELYAFKWT) are extracellular. Asn-927 is a glycosylation site (N-linked (GlcNAc...) asparagine). The helical transmembrane segment at 952–972 (TLLIPPTTLLILNIIGVVAGV) threads the bilayer. Residues 973–983 (SDAINNGSEAW) lie on the Cytoplasmic side of the membrane. Residues 984–1004 (GPLFGKLFFAFWVIVHLYPFL) form a helical membrane-spanning segment. Residues 1005-1013 (KGLMGRQNR) are Extracellular-facing. A helical membrane pass occupies residues 1014-1034 (TPTIVVIWSVLLASIFSLLWV). Residues 1035-1055 (RIDPFTIKARGPDVRQCGINC) are Cytoplasmic-facing.

It belongs to the glycosyltransferase 2 family. Plant cellulose synthase subfamily. Requires Mn(2+) as cofactor. The cofactor is Zn(2+).

The protein resides in the cell membrane. It catalyses the reaction [(1-&gt;4)-beta-D-glucosyl](n) + UDP-alpha-D-glucose = [(1-&gt;4)-beta-D-glucosyl](n+1) + UDP + H(+). It participates in glycan metabolism; plant cellulose biosynthesis. In terms of biological role, catalytic subunit of cellulose synthase terminal complexes ('rosettes'), required for beta-1,4-glucan microfibril crystallization, a major mechanism of the cell wall formation. Involved in the secondary cell wall formation. In Oryza sativa subsp. indica (Rice), this protein is Cellulose synthase A catalytic subunit 9 [UDP-forming] (CESA9).